Here is a 1299-residue protein sequence, read N- to C-terminus: DNA-directed RNA polymerase subunit beta' (1299 aa).

Positions 60, 62, 75, and 78 each coordinate Zn(2+). Residues 188–209 are disordered; that stretch reads GAKSDQKRRAKDGAEKEMGQTR. Residues aspartate 535, aspartate 537, and aspartate 539 each coordinate Mg(2+). Residues cysteine 882, cysteine 959, cysteine 966, and cysteine 969 each coordinate Zn(2+).

The protein belongs to the RNA polymerase beta' chain family. As to quaternary structure, the RNAP catalytic core consists of 2 alpha, 1 beta, 1 beta' and 1 omega subunit. When a sigma factor is associated with the core the holoenzyme is formed, which can initiate transcription. Mg(2+) serves as cofactor. Zn(2+) is required as a cofactor.

The catalysed reaction is RNA(n) + a ribonucleoside 5'-triphosphate = RNA(n+1) + diphosphate. Functionally, DNA-dependent RNA polymerase catalyzes the transcription of DNA into RNA using the four ribonucleoside triphosphates as substrates. This Clavibacter michiganensis subsp. michiganensis (strain NCPPB 382) protein is DNA-directed RNA polymerase subunit beta'.